The sequence spans 324 residues: NADH-ubiquinone oxidoreductase chain 1 (324 aa).

8 consecutive transmembrane segments (helical) span residues 9 to 29 (LINP…LTLI), 75 to 95 (FLFL…WAPM), 106 to 126 (LGIL…LGSG), 146 to 166 (ISYE…SGGY), 177 to 197 (SIWL…STLA), 228 to 248 (LFFL…AVLF), 259 to 279 (ELTT…FLWV), and 299 to 319 (FLPL…ALAG).

The protein belongs to the complex I subunit 1 family.

The protein resides in the mitochondrion inner membrane. The catalysed reaction is a ubiquinone + NADH + 5 H(+)(in) = a ubiquinol + NAD(+) + 4 H(+)(out). Core subunit of the mitochondrial membrane respiratory chain NADH dehydrogenase (Complex I) that is believed to belong to the minimal assembly required for catalysis. Complex I functions in the transfer of electrons from NADH to the respiratory chain. The immediate electron acceptor for the enzyme is believed to be ubiquinone. The protein is NADH-ubiquinone oxidoreductase chain 1 (MT-ND1) of Carassius auratus (Goldfish).